Here is a 308-residue protein sequence, read N- to C-terminus: Probable GTP 3',8-cyclase (308 aa).

In terms of domain architecture, Radical SAM core spans 4–224 (RFGRPLEDLR…QIRKKHFRPR (221 aa)). Arg13 provides a ligand contact to GTP. [4Fe-4S] cluster-binding residues include Cys20, Cys24, and Cys27. Lys60 contributes to the GTP binding site. Gly64 contacts S-adenosyl-L-methionine. Thr90 contacts GTP. Ser114 provides a ligand contact to S-adenosyl-L-methionine. Lys151 provides a ligand contact to GTP. The [4Fe-4S] cluster site is built by Cys245 and Cys248. 250-252 (RIR) is a binding site for GTP. Cys262 is a binding site for [4Fe-4S] cluster.

This sequence belongs to the radical SAM superfamily. MoaA family. Requires [4Fe-4S] cluster as cofactor.

It carries out the reaction GTP + AH2 + S-adenosyl-L-methionine = (8S)-3',8-cyclo-7,8-dihydroguanosine 5'-triphosphate + 5'-deoxyadenosine + L-methionine + A + H(+). It participates in cofactor biosynthesis; molybdopterin biosynthesis. In terms of biological role, catalyzes the cyclization of GTP to (8S)-3',8-cyclo-7,8-dihydroguanosine 5'-triphosphate. The protein is Probable GTP 3',8-cyclase of Saccharolobus islandicus (strain L.S.2.15 / Lassen #1) (Sulfolobus islandicus).